Reading from the N-terminus, the 248-residue chain is Short-chain dehydrogenase/reductase iacG (248 aa).

NADP(+) contacts are provided by Ile-14, Asn-35, Lys-41, Asp-58, Arg-120, and Val-187.

Belongs to the short-chain dehydrogenases/reductases (SDR) family.

Its pathway is secondary metabolite biosynthesis. Short-chain dehydrogenase/reductase; part of the gene cluster that mediates the biosynthesis of iso-A82775C, a enylepoxycyclohexane and biosynthetic precursor of the chloropestolide anticancer natural products. Within the cluster, the prenyltransferase iacE prenylates siccayne to generate pestalodiol E, using dimethylallyl diphosphate (DMAPP) as cosubstrate. The probable oxidoreductase iacF is then involved in the epoxidation of pestalodiol F to pestalodiol F, which is further converted to pestalofone A by the short-chain dehydrogenase/reductase iacG. Iso-A82775C is subsequently generated from pestalofone A by the short-chain dehydrogenase/reductase iacC. Iso-A82775C is further condensed with maldoxin via a Diels-Alder reaction to produce the anticancer natural products chloropestolides A to E. This Pestalotiopsis fici (strain W106-1 / CGMCC3.15140) protein is Short-chain dehydrogenase/reductase iacG.